A 273-amino-acid chain; its full sequence is 4-hydroxy-tetrahydrodipicolinate reductase (273 aa).

NAD(+) is bound by residues 8–13 (GACGRM), Glu-34, 102–104 (GTT), and 128–131 (APNM). Catalysis depends on His-160, which acts as the Proton donor/acceptor. His-161 is a (S)-2,3,4,5-tetrahydrodipicolinate binding site. Lys-164 (proton donor) is an active-site residue. 170 to 171 (GT) is a (S)-2,3,4,5-tetrahydrodipicolinate binding site.

The protein belongs to the DapB family.

The protein localises to the cytoplasm. It catalyses the reaction (S)-2,3,4,5-tetrahydrodipicolinate + NAD(+) + H2O = (2S,4S)-4-hydroxy-2,3,4,5-tetrahydrodipicolinate + NADH + H(+). The enzyme catalyses (S)-2,3,4,5-tetrahydrodipicolinate + NADP(+) + H2O = (2S,4S)-4-hydroxy-2,3,4,5-tetrahydrodipicolinate + NADPH + H(+). Its pathway is amino-acid biosynthesis; L-lysine biosynthesis via DAP pathway; (S)-tetrahydrodipicolinate from L-aspartate: step 4/4. Catalyzes the conversion of 4-hydroxy-tetrahydrodipicolinate (HTPA) to tetrahydrodipicolinate. The sequence is that of 4-hydroxy-tetrahydrodipicolinate reductase from Methanothermobacter thermautotrophicus (strain ATCC 29096 / DSM 1053 / JCM 10044 / NBRC 100330 / Delta H) (Methanobacterium thermoautotrophicum).